A 122-amino-acid chain; its full sequence is Large ribosomal subunit protein uL14 (122 aa).

This sequence belongs to the universal ribosomal protein uL14 family. Part of the 50S ribosomal subunit. Forms a cluster with proteins L3 and L19. In the 70S ribosome, L14 and L19 interact and together make contacts with the 16S rRNA in bridges B5 and B8.

Binds to 23S rRNA. Forms part of two intersubunit bridges in the 70S ribosome. This is Large ribosomal subunit protein uL14 from Exiguobacterium sp. (strain ATCC BAA-1283 / AT1b).